The primary structure comprises 530 residues: AP-4 complex subunit mu (530 aa).

A disordered region spans residues 164–187 (PKQGVKPIHSGSKNSSSGGSSLST). The span at 173–186 (SGSKNSSSGGSSLS) shows a compositional bias: low complexity. The 301-residue stretch at 227-527 (DNEIYIDLCE…ITDSKSFVSR (301 aa)) folds into the MHD domain.

This sequence belongs to the adaptor complexes medium subunit family. As to quaternary structure, may be part of the adaptor protein complex 4 (AP-4), a heterotetramer composed of two large adaptins (epsilon-type subunitand beta-type subunit), a medium adaptin (mu-type subunit) and a small adaptin (sigma-type).

It localises to the golgi apparatus. The protein resides in the trans-Golgi network membrane. The protein localises to the early endosome. Functionally, probable component of an adaptor protein complex. Adaptor protein complexes are vesicle coat components involved both in vesicle formation and cargo selection. They control the vesicular transport of proteins in different trafficking pathways. This chain is AP-4 complex subunit mu (apm4), found in Dictyostelium discoideum (Social amoeba).